Consider the following 304-residue polypeptide: Putative S-adenosyl-L-methionine-dependent methyltransferase MAV_4444 (304 aa).

S-adenosyl-L-methionine is bound by residues Asp130 and 159-160; that span reads DL.

The protein belongs to the UPF0677 family.

Its function is as follows. Exhibits S-adenosyl-L-methionine-dependent methyltransferase activity. The protein is Putative S-adenosyl-L-methionine-dependent methyltransferase MAV_4444 of Mycobacterium avium (strain 104).